The sequence spans 355 residues: MTALKNDRFLRALLKQPVDVTPVWMMRQAGRYLPEYRASRANAGDFMSLCMNPEFACEVTMQPLDRYPQLDAAILFSDILTIPDAMGQGLYFETGEGPRFKKVVSTLADIEALPIPDPHKDLGYVMDAVSTIRRELNGRVPLIGFSGSPWTLATYMVEGGSSKDFRKTKAMLYDNPQAMHLLLDKLAQSVTSYLNGQIMAGAQAVQIFDTWGGNLSAAAYQEFSLAYMRKIVSGLIREHEGRKVPVILFTKGGGLWLESIADAGADALGLDWTCDIGEARRRVGGQVALQGNMDPTVLYAKPEAIRTEVGRILASYGKGTGHVFNLGHGITPEVNPEHAGAFLRAVHELSAQYHE.

Substrate contacts are provided by residues 27–31 (RQAGR), aspartate 78, tyrosine 155, threonine 210, and histidine 328.

The protein belongs to the uroporphyrinogen decarboxylase family. As to quaternary structure, homodimer.

The protein localises to the cytoplasm. It catalyses the reaction uroporphyrinogen III + 4 H(+) = coproporphyrinogen III + 4 CO2. It functions in the pathway porphyrin-containing compound metabolism; protoporphyrin-IX biosynthesis; coproporphyrinogen-III from 5-aminolevulinate: step 4/4. Functionally, catalyzes the decarboxylation of four acetate groups of uroporphyrinogen-III to yield coproporphyrinogen-III. This Pseudomonas fluorescens (strain SBW25) protein is Uroporphyrinogen decarboxylase.